The following is a 308-amino-acid chain: Ornithine carbamoyltransferase (308 aa).

Residues 56–59 (STRT), Gln83, Arg107, and 134–137 (HPCQ) contribute to the carbamoyl phosphate site. Residues Asn165, Asp225, and 229–230 (SM) each bind L-ornithine. Carbamoyl phosphate contacts are provided by residues 266–267 (CL) and Arg294.

Belongs to the aspartate/ornithine carbamoyltransferase superfamily. OTCase family.

The protein resides in the cytoplasm. The enzyme catalyses carbamoyl phosphate + L-ornithine = L-citrulline + phosphate + H(+). It participates in amino-acid biosynthesis; L-arginine biosynthesis; L-arginine from L-ornithine and carbamoyl phosphate: step 1/3. Its function is as follows. Reversibly catalyzes the transfer of the carbamoyl group from carbamoyl phosphate (CP) to the N(epsilon) atom of ornithine (ORN) to produce L-citrulline. The sequence is that of Ornithine carbamoyltransferase from Cereibacter sphaeroides (strain ATCC 17029 / ATH 2.4.9) (Rhodobacter sphaeroides).